Reading from the N-terminus, the 370-residue chain is Queuine tRNA-ribosyltransferase (370 aa).

Aspartate 89 acts as the Proton acceptor in catalysis. Residues 89-93, aspartate 143, glutamine 187, and glycine 214 each bind substrate; that span reads DSGGF. The segment at 245 to 251 is RNA binding; that stretch reads GVGTPED. Aspartate 264 (nucleophile) is an active-site residue. The segment at 269 to 273 is RNA binding; important for wobble base 34 recognition; the sequence is TRNAR. Zn(2+)-binding residues include cysteine 302, cysteine 304, cysteine 307, and histidine 333.

It belongs to the queuine tRNA-ribosyltransferase family. In terms of assembly, homodimer. Within each dimer, one monomer is responsible for RNA recognition and catalysis, while the other monomer binds to the replacement base PreQ1. Requires Zn(2+) as cofactor.

It carries out the reaction 7-aminomethyl-7-carbaguanine + guanosine(34) in tRNA = 7-aminomethyl-7-carbaguanosine(34) in tRNA + guanine. Its pathway is tRNA modification; tRNA-queuosine biosynthesis. Catalyzes the base-exchange of a guanine (G) residue with the queuine precursor 7-aminomethyl-7-deazaguanine (PreQ1) at position 34 (anticodon wobble position) in tRNAs with GU(N) anticodons (tRNA-Asp, -Asn, -His and -Tyr). Catalysis occurs through a double-displacement mechanism. The nucleophile active site attacks the C1' of nucleotide 34 to detach the guanine base from the RNA, forming a covalent enzyme-RNA intermediate. The proton acceptor active site deprotonates the incoming PreQ1, allowing a nucleophilic attack on the C1' of the ribose to form the product. After dissociation, two additional enzymatic reactions on the tRNA convert PreQ1 to queuine (Q), resulting in the hypermodified nucleoside queuosine (7-(((4,5-cis-dihydroxy-2-cyclopenten-1-yl)amino)methyl)-7-deazaguanosine). The sequence is that of Queuine tRNA-ribosyltransferase from Aromatoleum aromaticum (strain DSM 19018 / LMG 30748 / EbN1) (Azoarcus sp. (strain EbN1)).